A 126-amino-acid chain; its full sequence is Histone H2B type 1-H (126 aa).

A compositionally biased stretch (low complexity) spans 1-12 (MPDPAKSAPAPK). Positions 1 to 36 (MPDPAKSAPAPKKGSKKAVTKAQKKDGKKRKRSRKE) are disordered. N-acetylproline is present on Pro2. An N6-(2-hydroxyisobutyryl)lysine; alternate modification is found at Lys6. The residue at position 6 (Lys6) is an N6-(beta-hydroxybutyryl)lysine; alternate. At Lys6 the chain carries N6-acetyllysine; alternate. Lys6 bears the N6-butyryllysine; alternate mark. An N6-crotonyllysine; alternate modification is found at Lys6. Lys6 is modified (N6-lactoyllysine; alternate). A Glycyl lysine isopeptide (Lys-Gly) (interchain with G-Cter in SUMO2); alternate cross-link involves residue Lys6. The residue at position 7 (Ser7) is an ADP-ribosylserine. Position 12 is an N6-(beta-hydroxybutyryl)lysine; alternate (Lys12). An N6-acetyllysine; alternate mark is found at Lys12 and Lys13. Lys12 and Lys13 each carry N6-crotonyllysine; alternate. An N6-lactoyllysine; alternate modification is found at Lys12. Lys13 bears the N6-(2-hydroxyisobutyryl)lysine; alternate mark. Residue Ser15 is modified to Phosphoserine; by STK4/MST1. N6-acetyllysine; alternate occurs at positions 16, 17, 21, and 24. An N6-crotonyllysine; alternate mark is found at Lys16, Lys17, Lys21, and Lys24. N6-lactoyllysine; alternate occurs at positions 16, 17, 21, and 24. 2 positions are modified to N6-(beta-hydroxybutyryl)lysine; alternate: Lys17 and Lys21. Lys17 is subject to N6-glutaryllysine; alternate. An N6-(2-hydroxyisobutyryl)lysine; alternate mark is found at Lys21 and Lys24. Residue Lys21 is modified to N6-butyryllysine; alternate. Lys21 is covalently cross-linked (Glycyl lysine isopeptide (Lys-Gly) (interchain with G-Cter in SUMO2); alternate). N6-(2-hydroxyisobutyryl)lysine is present on Lys25. Lys35 bears the N6-(2-hydroxyisobutyryl)lysine; alternate mark. The residue at position 35 (Lys35) is an N6-(beta-hydroxybutyryl)lysine; alternate. The residue at position 35 (Lys35) is an N6-crotonyllysine; alternate. Lys35 carries the N6-glutaryllysine; alternate modification. Lys35 is modified (N6-succinyllysine; alternate). Lys35 participates in a covalent cross-link: Glycyl lysine isopeptide (Lys-Gly) (interchain with G-Cter in ubiquitin); alternate. Glu36 is modified (polyADP-ribosyl glutamic acid). Ser37 is modified (phosphoserine; by AMPK). Residues Lys44, Lys47, and Lys58 each carry the N6-(2-hydroxyisobutyryl)lysine; alternate modification. Lys44 carries the N6-lactoyllysine; alternate modification. Lys44 and Lys47 each carry N6-glutaryllysine; alternate. Residue Lys47 is modified to N6-methyllysine; alternate. Lys58 is subject to N6,N6-dimethyllysine; alternate. Arg80 is subject to Dimethylated arginine. The residue at position 86 (Lys86) is an N6-(2-hydroxyisobutyryl)lysine; alternate. Residue Lys86 is modified to N6-(beta-hydroxybutyryl)lysine; alternate. Lys86 is subject to N6-acetyllysine; alternate. Lys86 carries the N6-lactoyllysine; alternate modification. Lys86 is modified (N6,N6,N6-trimethyllysine; alternate). Residues Arg87 and Arg93 each carry the omega-N-methylarginine modification. The residue at position 109 (Lys109) is an N6-(2-hydroxyisobutyryl)lysine; alternate. Position 109 is an N6-lactoyllysine; alternate (Lys109). The residue at position 109 (Lys109) is an N6-glutaryllysine; alternate. Lys109 is subject to N6-methyllysine; alternate. The O-linked (GlcNAc) serine glycan is linked to Ser113. Residue Thr116 is modified to Phosphothreonine. N6-(2-hydroxyisobutyryl)lysine; alternate occurs at positions 117 and 121. An N6-(beta-hydroxybutyryl)lysine; alternate mark is found at Lys117 and Lys121. 2 positions are modified to N6-lactoyllysine; alternate: Lys117 and Lys121. Lys117 and Lys121 each carry N6-glutaryllysine; alternate. 2 positions are modified to N6-succinyllysine; alternate: Lys117 and Lys121. An N6-malonyllysine; alternate modification is found at Lys117. Lys117 is subject to N6-methylated lysine; alternate. Lys121 participates in a covalent cross-link: Glycyl lysine isopeptide (Lys-Gly) (interchain with G-Cter in ubiquitin); alternate.

Belongs to the histone H2B family. The nucleosome is a histone octamer containing two molecules each of H2A, H2B, H3 and H4 assembled in one H3-H4 heterotetramer and two H2A-H2B heterodimers. The octamer wraps approximately 147 bp of DNA. Found in a complex with PPAR9; DTX3L AND STAT1; the interaction is likely to induce DTX3L-mediated ubiquitination of H2BC9/H2BJ. Post-translationally, monoubiquitination at Lys-35 (H2BK34Ub) by the MSL1/MSL2 dimer is required for histone H3 'Lys-4' (H3K4me) and 'Lys-79' (H3K79me) methylation and transcription activation at specific gene loci, such as HOXA9 and MEIS1 loci. Similarly, monoubiquitination at Lys-121 (H2BK120Ub) by the RNF20/40 complex gives a specific tag for epigenetic transcriptional activation and is also prerequisite for histone H3 'Lys-4' and 'Lys-79' methylation. It also functions cooperatively with the FACT dimer to stimulate elongation by RNA polymerase II. H2BK120Ub also acts as a regulator of mRNA splicing: deubiquitination by USP49 is required for efficient cotranscriptional splicing of a large set of exons. Monoubiquitinated by DTX3L upon encephalomyocarditis virus (EMCV)-mediated infection. In terms of processing, phosphorylation at Ser-37 (H2BS36ph) by AMPK in response to stress promotes transcription. Phosphorylated on Ser-15 (H2BS14ph) by STK4/MST1 during apoptosis; which facilitates apoptotic chromatin condensation. Also phosphorylated on Ser-15 in response to DNA double strand breaks (DSBs), and in correlation with somatic hypermutation and immunoglobulin class-switch recombination. GlcNAcylation at Ser-113 promotes monoubiquitination of Lys-121. It fluctuates in response to extracellular glucose, and associates with transcribed genes. Post-translationally, ADP-ribosylated by PARP1 or PARP2 on Ser-7 (H2BS6ADPr) in response to DNA damage. H2BS6ADPr promotes recruitment of CHD1L. Poly ADP-ribosylation on Glu-36 (H2BE35ADPr) by PARP1 regulates adipogenesis: it inhibits phosphorylation at Ser-37 (H2BS36ph), thereby blocking expression of pro-adipogenetic genes. In terms of processing, crotonylation (Kcr) is specifically present in male germ cells and marks testis-specific genes in post-meiotic cells, including X-linked genes that escape sex chromosome inactivation in haploid cells. Crotonylation marks active promoters and enhancers and confers resistance to transcriptional repressors. It is also associated with post-meiotically activated genes on autosomes. Lactylated in macrophages by EP300/P300 by using lactoyl-CoA directly derived from endogenous or exogenous lactate, leading to stimulates gene transcription.

The protein localises to the nucleus. It localises to the chromosome. Core component of nucleosome. Nucleosomes wrap and compact DNA into chromatin, limiting DNA accessibility to the cellular machineries which require DNA as a template. Histones thereby play a central role in transcription regulation, DNA repair, DNA replication and chromosomal stability. DNA accessibility is regulated via a complex set of post-translational modifications of histones, also called histone code, and nucleosome remodeling. This is Histone H2B type 1-H from Homo sapiens (Human).